Reading from the N-terminus, the 393-residue chain is Acetylornithine aminotransferase (393 aa).

Pyridoxal 5'-phosphate contacts are provided by residues 100-101 (GA) and Phe-133. Residue Arg-136 participates in N(2)-acetyl-L-ornithine binding. 218–221 (DEVQ) is a binding site for pyridoxal 5'-phosphate. Lys-247 is subject to N6-(pyridoxal phosphate)lysine. Ser-274 provides a ligand contact to N(2)-acetyl-L-ornithine. Thr-275 contacts pyridoxal 5'-phosphate.

The protein belongs to the class-III pyridoxal-phosphate-dependent aminotransferase family. ArgD subfamily. As to quaternary structure, homodimer. Requires pyridoxal 5'-phosphate as cofactor.

Its subcellular location is the cytoplasm. It carries out the reaction N(2)-acetyl-L-ornithine + 2-oxoglutarate = N-acetyl-L-glutamate 5-semialdehyde + L-glutamate. The protein operates within amino-acid biosynthesis; L-arginine biosynthesis; N(2)-acetyl-L-ornithine from L-glutamate: step 4/4. The protein is Acetylornithine aminotransferase of Caldanaerobacter subterraneus subsp. tengcongensis (strain DSM 15242 / JCM 11007 / NBRC 100824 / MB4) (Thermoanaerobacter tengcongensis).